Here is a 741-residue protein sequence, read N- to C-terminus: Catalase-peroxidase 2 (741 aa).

A signal peptide spans 1 to 28 (MQKKRIGKSVVAALAIIAMSAGTVAAWA). The tryptophyl-tyrosyl-methioninium (Trp-Tyr) (with M-254) cross-link spans 107–228 (WHGAGTYRTY…LAATQMGLIY (122 aa)). Catalysis depends on histidine 108, which acts as the Proton acceptor. The segment at residues 228–254 (YVNPEGPNGNPDPVAAAKDIREAFGRM) is a cross-link (tryptophyl-tyrosyl-methioninium (Tyr-Met) (with W-107)). Histidine 269 contributes to the heme b binding site.

The protein belongs to the peroxidase family. Peroxidase/catalase subfamily. Homodimer or homotetramer. Heme b is required as a cofactor. Formation of the three residue Trp-Tyr-Met cross-link is important for the catalase, but not the peroxidase activity of the enzyme.

The enzyme catalyses H2O2 + AH2 = A + 2 H2O. It catalyses the reaction 2 H2O2 = O2 + 2 H2O. Functionally, bifunctional enzyme with both catalase and broad-spectrum peroxidase activity. This is Catalase-peroxidase 2 from Burkholderia ambifaria (strain MC40-6).